Reading from the N-terminus, the 323-residue chain is uncharacterized protein (323 aa).

A helical membrane pass occupies residues 4–24; that stretch reads IIFAFIILFVFLLPMIIFYQP.

The protein resides in the membrane. This is an uncharacterized protein from Escherichia coli (strain K12).